The chain runs to 1454 residues: Alpha-2-macroglobulin-like protein 1 (1454 aa).

The signal sequence occupies residues 1-17 (MWAQLLLGMLALSPAIA). Residues Cys-40 and Cys-78 are joined by a disulfide bond. An N-linked (GlcNAc...) asparagine glycan is attached at Asn-120. 2 disulfide bridges follow: Cys-241–Cys-291 and Cys-259–Cys-279. Residues Asn-281 and Asn-409 are each glycosylated (N-linked (GlcNAc...) asparagine). Cystine bridges form between Cys-464–Cys-557, Cys-589–Cys-769, Cys-819–Cys-847, Cys-845–Cys-881, Cys-919–Cys-1307, Cys-1075–Cys-1123, and Cys-1338–Cys-1453. The interval 695 to 726 (SHRSPEYSTAMGAGGGHPEAFESSTPLHQAED) is bait region. A glycan (N-linked (GlcNAc...) asparagine) is linked at Asn-857. A cross-link (isoglutamyl cysteine thioester (Cys-Gln)) is located at residues 970 to 973 (CGEQ). N-linked (GlcNAc...) asparagine glycosylation is present at Asn-1020.

Belongs to the protease inhibitor I39 (alpha-2-macroglobulin) family. As to quaternary structure, monomer. As to expression, in the epidermis, expressed predominantly in the granular layer at the apical edge of keratinocytes (at protein level). Also detected in placenta, testis and thymus but not in epithelia of kidney, lung, small intestine or colon.

The protein resides in the secreted. Its function is as follows. Is able to inhibit all four classes of proteinases by a unique 'trapping' mechanism. This protein has a peptide stretch, called the 'bait region' which contains specific cleavage sites for different proteinases. When a proteinase cleaves the bait region, a conformational change is induced in the protein which traps the proteinase. The entrapped enzyme remains active against low molecular weight substrates (activity against high molecular weight substrates is greatly reduced). Following cleavage in the bait region a thioester bond is hydrolyzed and mediates the covalent binding of the protein to the proteinase. Displays inhibitory activity against chymotrypsin, papain, thermolysin, subtilisin A and, to a lesser extent, elastase but not trypsin. May play an important role during desquamation by inhibiting extracellular proteases. The sequence is that of Alpha-2-macroglobulin-like protein 1 from Homo sapiens (Human).